The primary structure comprises 192 residues: Epididymal-specific lipocalin-5 (192 aa).

An N-terminal signal peptide occupies residues 1 to 26 (MCSVARHMESIMLFTLLGLCVGLAAG). An intrachain disulfide couples cysteine 89 to cysteine 183.

The protein belongs to the calycin superfamily. Lipocalin family. In terms of processing, 2 different forms with differently processed N-termini exist. Epididymal fluid of the caudal and corpus regions (at protein level).

The protein localises to the secreted. In terms of biological role, associates with spermatozoa in the epididymal fluid but does not bind tightly to them. Binds both all-trans and 13-cis retinoic acid. May act as a retinoid carrier protein which is required for epididymal function and/or sperm maturation. In Mus musculus (Mouse), this protein is Epididymal-specific lipocalin-5.